The following is a 206-amino-acid chain: Small ribosomal subunit protein uS4c (206 aa).

2 stretches are compositionally biased toward basic residues: residues 1–13 (MSRYRGPKLRITR) and 25–34 (QSKKKGRPGQ). Positions 1–50 (MSRYRGPKLRITRRLGALPGLTQKQSKKKGRPGQHGKSNEADNSKKTTEY) are disordered. Residues 37-50 (KSNEADNSKKTTEY) show a composition bias toward basic and acidic residues. The S4 RNA-binding domain occupies 95–157 (MRLDTICFTL…ATSKNLVEGN (63 aa)).

The protein belongs to the universal ribosomal protein uS4 family. In terms of assembly, part of the 30S ribosomal subunit. Contacts protein S5. The interaction surface between S4 and S5 is involved in control of translational fidelity.

Its subcellular location is the plastid. It localises to the chloroplast. Its function is as follows. One of the primary rRNA binding proteins, it binds directly to 16S rRNA where it nucleates assembly of the body of the 30S subunit. With S5 and S12 plays an important role in translational accuracy. The sequence is that of Small ribosomal subunit protein uS4c (rps4) from Trieres chinensis (Marine centric diatom).